Here is a 423-residue protein sequence, read N- to C-terminus: COP9 signalosome complex subunit 3 (423 aa).

The 169-residue stretch at asparagine 197 to glutamate 365 folds into the PCI domain. A compositionally biased stretch (polar residues) spans proline 401–serine 410. The segment at proline 401–serine 423 is disordered.

Belongs to the CSN3 family. As to quaternary structure, component of the CSN complex, probably composed of cops1, cops2, cops3, cops4, cops5, cops6, cops7, cops8 and cops9.

The protein resides in the cytoplasm. It is found in the nucleus. Its function is as follows. Component of the COP9 signalosome complex (CSN), a complex involved in various cellular and developmental processes. The CSN complex is an essential regulator of the ubiquitin (Ubl) conjugation pathway by mediating the deneddylation of the cullin subunits of E3 ligase complexes, leading to modify the Ubl ligase activity. In Xenopus laevis (African clawed frog), this protein is COP9 signalosome complex subunit 3 (cops3).